The following is a 163-amino-acid chain: NADH-quinone oxidoreductase subunit I (163 aa).

4Fe-4S ferredoxin-type domains lie at 54–84 (LRRY…IESD) and 94–123 (TRYD…ETHI). [4Fe-4S] cluster-binding residues include Cys-64, Cys-67, Cys-70, Cys-74, Cys-103, Cys-106, Cys-109, and Cys-113.

Belongs to the complex I 23 kDa subunit family. As to quaternary structure, NDH-1 is composed of 14 different subunits. Subunits NuoA, H, J, K, L, M, N constitute the membrane sector of the complex. Requires [4Fe-4S] cluster as cofactor.

The protein resides in the cell inner membrane. It catalyses the reaction a quinone + NADH + 5 H(+)(in) = a quinol + NAD(+) + 4 H(+)(out). NDH-1 shuttles electrons from NADH, via FMN and iron-sulfur (Fe-S) centers, to quinones in the respiratory chain. The immediate electron acceptor for the enzyme in this species is believed to be ubiquinone. Couples the redox reaction to proton translocation (for every two electrons transferred, four hydrogen ions are translocated across the cytoplasmic membrane), and thus conserves the redox energy in a proton gradient. The polypeptide is NADH-quinone oxidoreductase subunit I (Cupriavidus metallidurans (strain ATCC 43123 / DSM 2839 / NBRC 102507 / CH34) (Ralstonia metallidurans)).